A 204-amino-acid chain; its full sequence is FMN-dependent NADH:quinone oxidoreductase (204 aa).

FMN-binding positions include S9, 15–17 (SVS), and 97–100 (MYNF).

The protein belongs to the azoreductase type 1 family. As to quaternary structure, homodimer. It depends on FMN as a cofactor.

It carries out the reaction 2 a quinone + NADH + H(+) = 2 a 1,4-benzosemiquinone + NAD(+). The catalysed reaction is N,N-dimethyl-1,4-phenylenediamine + anthranilate + 2 NAD(+) = 2-(4-dimethylaminophenyl)diazenylbenzoate + 2 NADH + 2 H(+). Its function is as follows. Quinone reductase that provides resistance to thiol-specific stress caused by electrophilic quinones. Functionally, also exhibits azoreductase activity. Catalyzes the reductive cleavage of the azo bond in aromatic azo compounds to the corresponding amines. The sequence is that of FMN-dependent NADH:quinone oxidoreductase from Methylobacterium radiotolerans (strain ATCC 27329 / DSM 1819 / JCM 2831 / NBRC 15690 / NCIMB 10815 / 0-1).